The primary structure comprises 157 residues: Small ribosomal subunit protein uS7 (157 aa).

The protein belongs to the universal ribosomal protein uS7 family. In terms of assembly, part of the 30S ribosomal subunit. Contacts proteins S9 and S11.

In terms of biological role, one of the primary rRNA binding proteins, it binds directly to 16S rRNA where it nucleates assembly of the head domain of the 30S subunit. Is located at the subunit interface close to the decoding center, probably blocks exit of the E-site tRNA. The protein is Small ribosomal subunit protein uS7 of Akkermansia muciniphila (strain ATCC BAA-835 / DSM 22959 / JCM 33894 / BCRC 81048 / CCUG 64013 / CIP 107961 / Muc).